The primary structure comprises 118 residues: uncharacterized protein (118 aa).

Residues 1–12 show a composition bias toward polar residues; sequence MADDNVSFTDQG. The tract at residues 1–63 is disordered; that stretch reads MADDNVSFTD…KKGKTKKVRK (63 aa). A compositionally biased stretch (basic residues) spans 39-63; it reads TKKKGKKNKKSKKKAKKGKTKKVRK. The helical transmembrane segment at 81–101 threads the bilayer; the sequence is FCAGIIVAMIMLFVIIIYGII.

It localises to the membrane. This is an uncharacterized protein from Caenorhabditis elegans.